A 356-amino-acid polypeptide reads, in one-letter code: Ferrochelatase (356 aa).

Fe cation contacts are provided by His214 and Glu295.

This sequence belongs to the ferrochelatase family.

Its subcellular location is the cytoplasm. It carries out the reaction heme b + 2 H(+) = protoporphyrin IX + Fe(2+). It participates in porphyrin-containing compound metabolism; protoheme biosynthesis; protoheme from protoporphyrin-IX: step 1/1. In terms of biological role, catalyzes the ferrous insertion into protoporphyrin IX. This Paraburkholderia phymatum (strain DSM 17167 / CIP 108236 / LMG 21445 / STM815) (Burkholderia phymatum) protein is Ferrochelatase.